We begin with the raw amino-acid sequence, 309 residues long: Serine/threonine-protein phosphatase 2A catalytic subunit alpha isoform (309 aa).

Mn(2+) is bound by residues D57, H59, D85, and N117. 3 residues coordinate Zn(2+): D57, H59, and D85. Fe(3+) is bound by residues D85 and N117. Residue H118 is the Proton donor of the active site. Residues H167 and H241 each contribute to the Mn(2+) site. The Fe(3+) site is built by H167 and H241. A Phosphotyrosine modification is found at Y307. Position 309 is a leucine methyl ester (L309).

It belongs to the PPP phosphatase family. PP-1 subfamily. PP2A consists of a common heterodimeric core enzyme composed of PPP2CA, a 36 kDa catalytic subunit (subunit C), and PPP2R1A, a 65 kDa constant regulatory subunit (PR65 or subunit A), that associates with a variety of regulatory subunits. Proteins that associate with the core dimer include three families of regulatory subunits B (the R2/B/PR55/B55, R3/B''/PR72/PR130/PR59 and R5/B'/B56 families), the 48 kDa variable regulatory subunit, viral proteins, and cell signaling molecules. Interacts with the PP2A A subunit PPP2R1A. Interacts with the regulatory subunit PPP2R2A. Interacts (via C-terminus) with PTPA. Interacts with NXN; the interaction is direct. Interacts with KCTD20. Interacts with BTBD10. Interacts with SGO1 and SGO2. Interacts with RAF1. Interaction with IGBP1 protects unassembled PPP2CA from degradative ubiquitination. Interacts with GSK3B (via C2 domain). Interacts with MFHAS1; retains PPP2CA into the cytoplasm and excludes it from the nucleus. Interacts with PABIR1/FAM122A. Interacts with ADCY8; interaction is phosphatase activity-dependent; antagonizes interaction between ADCY8 and calmodulin. Interacts with CRTC3 (when phosphorylated at 'Ser-391'). Interacts with SPRY2; the interaction is inhibited by TESK1 interaction with SPRY2, possibly by vesicular sequestration of SPRY2. Interacts with TRAF3IP3. Interacts with AMBRA1 (via PxP motifs); enhancing interaction between PPP2CA and MYC or FOXO3. Forms a complex with AMBRA1 and BECN1; AMBRA1 and BECN1 components of the complex regulate MYC stability via different pathways. Part of the core of STRIPAK complexes composed of PP2A catalytic and scaffolding subunits, the striatins (PP2A regulatory subunits), the striatin-associated proteins MOB4, STRIP1 and STRIP2, PDCD10 and members of the STE20 kinases, such as STK24 and STK26. Phosphatase component of the Integrator-PP2A (INTAC) complex, composed of the Integrator core complex and protein phosphatase 2A subunits PPP2CA and PPP2R1A. Requires Mn(2+) as cofactor. The cofactor is Fe(3+). It depends on Zn(2+) as a cofactor. In terms of processing, reversibly methyl esterified on Leu-309 by leucine carboxyl methyltransferase 1 (LCMT1) and protein phosphatase methylesterase 1 (PPME1). Carboxyl methylation influences the affinity of the catalytic subunit for the different regulatory subunits, thereby modulating the PP2A holoenzyme's substrate specificity, enzyme activity and cellular localization. Post-translationally, phosphorylation of either threonine (by autophosphorylation-activated protein kinase) or tyrosine results in inactivation of the phosphatase. Auto-dephosphorylation has been suggested as a mechanism for reactivation. Polyubiquitinated, leading to its degradation by the proteasome.

It is found in the cytoplasm. The protein localises to the nucleus. Its subcellular location is the chromosome. It localises to the centromere. The protein resides in the cytoskeleton. It is found in the spindle pole. It carries out the reaction O-phospho-L-seryl-[protein] + H2O = L-seryl-[protein] + phosphate. The catalysed reaction is O-phospho-L-threonyl-[protein] + H2O = L-threonyl-[protein] + phosphate. Its activity is regulated as follows. Inhibited by the interaction between PPP2R2A and ARPP19; this inhibition is enhanced when ARPP19 is phosphorylated. Inhibited by the interaction between PPP2R2A and PABIR1/FAM122A. Functionally, catalytic subunit of protein phosphatase 2A (PP2A), a serine/threonine phosphatase involved in the regulation of a wide variety of enzymes, signal transduction pathways, and cellular events. PP2A is the major phosphatase for microtubule-associated proteins (MAPs). PP2A can modulate the activity of phosphorylase B kinase casein kinase 2, mitogen-stimulated S6 kinase, and MAP-2 kinase. Cooperates with SGO2 to protect centromeric cohesin from separase-mediated cleavage in oocytes specifically during meiosis I. Can dephosphorylate various proteins, such as SV40 large T antigen, AXIN1, p53/TP53, PIM3, WEE1. Activates RAF1 by dephosphorylating it at 'Ser-259'. Mediates dephosphorylation of WEE1, preventing its ubiquitin-mediated proteolysis, increasing WEE1 protein levels, and promoting the G2/M checkpoint. Mediates dephosphorylation of MYC; promoting its ubiquitin-mediated proteolysis: interaction with AMBRA1 enhances interaction between PPP2CA and MYC. Mediates dephosphorylation of FOXO3; promoting its stabilization: interaction with AMBRA1 enhances interaction between PPP2CA and FOXO3. Catalyzes dephosphorylation of the pyrin domain of NLRP3, promoting assembly of the NLRP3 inflammasome. Together with RACK1 adapter, mediates dephosphorylation of AKT1 at 'Ser-473', preventing AKT1 activation and AKT-mTOR signaling pathway. Dephosphorylation of AKT1 is essential for regulatory T-cells (Treg) homeostasis and stability. Catalyzes dephosphorylation of PIM3, promotinh PIM3 ubiquitination and proteasomal degradation. Part of the striatin-interacting phosphatase and kinase (STRIPAK) complexes. STRIPAK complexes have critical roles in protein (de)phosphorylation and are regulators of multiple signaling pathways including Hippo, MAPK, nuclear receptor and cytoskeleton remodeling. Different types of STRIPAK complexes are involved in a variety of biological processes such as cell growth, differentiation, apoptosis, metabolism and immune regulation. Key mediator of a quality checkpoint during transcription elongation as part of the Integrator-PP2A (INTAC) complex. The INTAC complex drives premature transcription termination of transcripts that are unfavorably configured for transcriptional elongation: within the INTAC complex, PPP2CA catalyzes dephosphorylation of the C-terminal domain (CTD) of Pol II subunit POLR2A/RPB1 and SUPT5H/SPT5, thereby preventing transcriptional elongation. The chain is Serine/threonine-protein phosphatase 2A catalytic subunit alpha isoform (PPP2CA) from Homo sapiens (Human).